The chain runs to 546 residues: uncharacterized protein (546 aa).

Transmembrane regions (helical) follow at residues Ile-4 to Leu-23, Gly-30 to Ser-47, Ile-57 to Val-79, Ala-91 to Phe-113, and Pro-155 to Val-177. RCK C-terminal domains lie at Gly-189–Glu-274 and Val-275–Asp-359. 6 consecutive transmembrane segments (helical) span residues Phe-372–Thr-394, Phe-399–Trp-421, Ile-434–Ala-456, Gly-460–Gly-482, Pro-489–Leu-511, and Ile-521–Thr-543.

This sequence belongs to the AAE transporter (TC 2.A.81) family.

The protein localises to the cell membrane. This is an uncharacterized protein from Geobacter sulfurreducens (strain ATCC 51573 / DSM 12127 / PCA).